A 358-amino-acid polypeptide reads, in one-letter code: Glycerol-3-phosphate dehydrogenase [NAD(P)+] (358 aa).

4 residues coordinate NADPH: Ser-33, Phe-34, Arg-54, and Lys-128. Residues Lys-128 and Gly-156 each coordinate sn-glycerol 3-phosphate. Ala-160 is a binding site for NADPH. Residues Lys-211, Asp-264, Ser-274, Arg-275, and Asn-276 each coordinate sn-glycerol 3-phosphate. Lys-211 serves as the catalytic Proton acceptor. Arg-275 provides a ligand contact to NADPH. Residues Val-299 and Glu-301 each coordinate NADPH.

Belongs to the NAD-dependent glycerol-3-phosphate dehydrogenase family.

Its subcellular location is the cytoplasm. The enzyme catalyses sn-glycerol 3-phosphate + NAD(+) = dihydroxyacetone phosphate + NADH + H(+). The catalysed reaction is sn-glycerol 3-phosphate + NADP(+) = dihydroxyacetone phosphate + NADPH + H(+). It functions in the pathway membrane lipid metabolism; glycerophospholipid metabolism. Its function is as follows. Catalyzes the reduction of the glycolytic intermediate dihydroxyacetone phosphate (DHAP) to sn-glycerol 3-phosphate (G3P), the key precursor for phospholipid synthesis. The protein is Glycerol-3-phosphate dehydrogenase [NAD(P)+] of Saccharophagus degradans (strain 2-40 / ATCC 43961 / DSM 17024).